The sequence spans 511 residues: GMP synthase [glutamine-hydrolyzing] (511 aa).

The Glutamine amidotransferase type-1 domain maps to 5–195 (DILVLDFGSQ…AKYACNCESV (191 aa)). Cysteine 82 acts as the Nucleophile in catalysis. Catalysis depends on residues histidine 169 and glutamate 171. Residues 196-386 (WNMGSFAKTQ…LGLSKEVVYR (191 aa)) form the GMPS ATP-PPase domain. Residue 223–229 (SGGVDSS) participates in ATP binding.

As to quaternary structure, homodimer.

The enzyme catalyses XMP + L-glutamine + ATP + H2O = GMP + L-glutamate + AMP + diphosphate + 2 H(+). Its pathway is purine metabolism; GMP biosynthesis; GMP from XMP (L-Gln route): step 1/1. Catalyzes the synthesis of GMP from XMP. In Campylobacter jejuni subsp. doylei (strain ATCC BAA-1458 / RM4099 / 269.97), this protein is GMP synthase [glutamine-hydrolyzing].